A 583-amino-acid polypeptide reads, in one-letter code: Threonine--tRNA ligase (583 aa).

Residues 185–478 (DHRKLGRELD…LVEHYGGAFP (294 aa)) form a catalytic region. Positions 278, 329, and 455 each coordinate Zn(2+).

Belongs to the class-II aminoacyl-tRNA synthetase family. As to quaternary structure, homodimer. It depends on Zn(2+) as a cofactor.

Its subcellular location is the cytoplasm. The catalysed reaction is tRNA(Thr) + L-threonine + ATP = L-threonyl-tRNA(Thr) + AMP + diphosphate + H(+). Catalyzes the attachment of threonine to tRNA(Thr) in a two-step reaction: L-threonine is first activated by ATP to form Thr-AMP and then transferred to the acceptor end of tRNA(Thr). Also edits incorrectly charged L-seryl-tRNA(Thr). The chain is Threonine--tRNA ligase from Borrelia turicatae (strain 91E135).